Reading from the N-terminus, the 133-residue chain is MSAKTDEILEQLKSLSLLEASELVKQIEDAFGVSAAAPAGGMMMPMAMPGAPGAAAAEPEEEQTEFDAILTEFPSDKKIAILKVVRSITGLGLKEAKELVESVPKPLKEGIAKEAAEDIKKQLEEAGAKVEIK.

It belongs to the bacterial ribosomal protein bL12 family. As to quaternary structure, homodimer. Part of the ribosomal stalk of the 50S ribosomal subunit. Forms a multimeric L10(L12)X complex, where L10 forms an elongated spine to which 2 to 4 L12 dimers bind in a sequential fashion. Binds GTP-bound translation factors.

Forms part of the ribosomal stalk which helps the ribosome interact with GTP-bound translation factors. Is thus essential for accurate translation. The chain is Large ribosomal subunit protein bL12 from Trichodesmium erythraeum (strain IMS101).